A 131-amino-acid polypeptide reads, in one-letter code: Maturin (131 aa).

Positions 107–120 are enriched in acidic residues; the sequence is FEEYNADVEEEEPE. The tract at residues 107-131 is disordered; the sequence is FEEYNADVEEEEPEADHQQMGVSQQ.

This sequence belongs to the MTURN family.

The protein resides in the cytoplasm. Functionally, involved in early neuronal development; required for cell cycle exit and differentiation of primary neurons. Cooperates synergistically with pak3 to promote primary neural differentiation within the neural plate. May play a role in promoting megakaryocyte differentiation. In Xenopus laevis (African clawed frog), this protein is Maturin (mturn).